A 218-amino-acid chain; its full sequence is Small ribosomal subunit protein uS3c (218 aa).

The region spanning 47–118 (VQKNIRISSG…KLNIAITRIS (72 aa)) is the KH type-2 domain.

It belongs to the universal ribosomal protein uS3 family. As to quaternary structure, part of the 30S ribosomal subunit.

Its subcellular location is the plastid. It is found in the chloroplast. In Arabis hirsuta (Hairy rock-cress), this protein is Small ribosomal subunit protein uS3c (rps3).